We begin with the raw amino-acid sequence, 201 residues long: Ubiquitin-conjugating enzyme E2 E2 (201 aa).

The segment covering Met1–Asp10 has biased composition (basic and acidic residues). The disordered stretch occupies residues Met1–Thr55. The residue at position 2 (Ser2) is an N-acetylserine. Phosphoserine occurs at positions 11, 15, 18, and 19. Residues Gly21–Ile45 are compositionally biased toward basic and acidic residues. The span at Ser46–Thr55 shows a compositional bias: low complexity. In terms of domain architecture, UBC core spans Thr55 to Thr201. Cys139 (glycyl thioester intermediate) is an active-site residue.

This sequence belongs to the ubiquitin-conjugating enzyme family. Autoubiquitinated in vitro.

It carries out the reaction S-ubiquitinyl-[E1 ubiquitin-activating enzyme]-L-cysteine + [E2 ubiquitin-conjugating enzyme]-L-cysteine = [E1 ubiquitin-activating enzyme]-L-cysteine + S-ubiquitinyl-[E2 ubiquitin-conjugating enzyme]-L-cysteine.. The protein operates within protein modification; protein ubiquitination. In terms of biological role, accepts ubiquitin from the E1 complex and catalyzes its covalent attachment to other proteins. In vitro catalyzes 'Lys-11'- and 'Lys-48'-, as well as 'Lys-63'-linked polyubiquitination. Catalyzes the ISGylation of influenza A virus NS1 protein. The sequence is that of Ubiquitin-conjugating enzyme E2 E2 from Homo sapiens (Human).